A 96-amino-acid chain; its full sequence is MAAKNSEMKFAIFFVVLLTTTLVDMSGISKMQVMALRDIPPQETLLKMKLLPTNILGLCNEPCSSNSDCIGITLCQFCKEKTDQYGLTYRTCNLLP.

3 disulfide bridges follow: C59-C75, C63-C78, and C69-C92.

As to expression, fruit specific.

This is Fruit-specific protein (2A11) from Solanum lycopersicum (Tomato).